A 111-amino-acid chain; its full sequence is Putative G antigen family E member 3 (111 aa).

The interval 1–67 (MSEHVRTRSQ…EGAPAVQGPD (67 aa)) is disordered. A compositionally biased stretch (polar residues) spans 8–24 (RSQSSERGNDQESSQPV). Position 97 is a phosphothreonine (threonine 97).

Belongs to the GAGE family.

This is Putative G antigen family E member 3 (PAGE2B) from Homo sapiens (Human).